The chain runs to 169 residues: Probable calcium-binding protein CML20 (169 aa).

The tract at residues 1–23 (MSSIYRTVSRKEKPRRHHGLTTQ) is disordered. 4 consecutive EF-hand domains span residues 23–58 (QKKQ…LGFE), 59–94 (MTEE…KIGE), 96–131 (DTKE…LGEN), and 132–167 (FTDA…TAYG). 19 residues coordinate Ca(2+): D36, D38, S40, T42, E47, D72, D74, S76, E83, D109, D111, N113, K115, D120, D145, D147, D149, E151, and E156.

As to quaternary structure, interacts with TON1A and TON1B. Interacts with SAC3A and SAC3B. Interacts with UCH1 and UCH2.

Potential calcium sensor. The polypeptide is Probable calcium-binding protein CML20 (Arabidopsis thaliana (Mouse-ear cress)).